The sequence spans 580 residues: 2-hydroxyacyl-CoA lyase 1 (580 aa).

Thiamine diphosphate is bound at residue glutamate 47. A thiamine pyrophosphate binding region spans residues 413 to 494; the sequence is TMDIGRLCIP…FIVLNNNGVY (82 aa). Mg(2+)-binding residues include aspartate 463 and asparagine 490.

This sequence belongs to the TPP enzyme family. In terms of assembly, homotetramer. The cofactor is Mg(2+). Thiamine diphosphate serves as cofactor.

It localises to the peroxisome. The catalysed reaction is a 2-hydroxy-3-methyl fatty acyl-CoA = a 2-methyl-branched fatty aldehyde + formyl-CoA. It carries out the reaction an (R)-2-hydroxy-long-chain-fatty acyl-CoA = a long-chain fatty aldehyde + formyl-CoA. The enzyme catalyses 2-hydroxy-3-methylhexadecanoyl-CoA = 2-methylpentadecanal + formyl-CoA. It catalyses the reaction 2-hydroxyoctadecanoyl-CoA = heptadecanal + formyl-CoA. In terms of biological role, peroxisomal 2-OH acyl-CoA lyase involved in the cleavage (C1 removal) reaction in the fatty acid alpha-oxydation in a thiamine pyrophosphate (TPP)-dependent manner. Involved in the degradation of 3-methyl-branched fatty acids and the shortening of 2-hydroxy long-chain fatty acids. In Dictyostelium discoideum (Social amoeba), this protein is 2-hydroxyacyl-CoA lyase 1 (hacl1).